The following is a 161-amino-acid chain: Regulator of ribonuclease activity A (161 aa).

This sequence belongs to the RraA family. Homotrimer. Binds to both RNA-binding sites in the C-terminal region of Rne and to RhlB.

It is found in the cytoplasm. Functionally, globally modulates RNA abundance by binding to RNase E (Rne) and regulating its endonucleolytic activity. Can modulate Rne action in a substrate-dependent manner by altering the composition of the degradosome. Modulates RNA-binding and helicase activities of the degradosome. The polypeptide is Regulator of ribonuclease activity A (Shewanella oneidensis (strain ATCC 700550 / JCM 31522 / CIP 106686 / LMG 19005 / NCIMB 14063 / MR-1)).